Reading from the N-terminus, the 437-residue chain is UDP-glucuronate 4-epimerase 4 (437 aa).

Residues 30-50 (SLTKFAFFSFFLLCLISLLFL) form a helical membrane-spanning segment. The tract at residues 56–76 (INPSSPSDPSRRSLRTNTYGG) is disordered. A helical membrane pass occupies residues 96–116 (GITVLVTGAAGFVGTHVSAAL). Position 98 to 129 (98 to 129 (TVLVTGAAGFVGTHVSAALKRRGDGVIGLDNF)) interacts with NAD(+). Y248 functions as the Proton acceptor in the catalytic mechanism.

The protein belongs to the NAD(P)-dependent epimerase/dehydratase family. In terms of assembly, homodimer. In roots, leaves, siliques, flowers, pollen and stems.

Its subcellular location is the golgi apparatus. It is found in the golgi stack membrane. It catalyses the reaction UDP-alpha-D-glucuronate = UDP-alpha-D-galacturonate. Activated by glycerol, not effected by dimethyl sulfoxide and inhibited by high concentration of monovalent salts, UDP-xylose, UDP-arabinose or UDP. Functionally, involved in the synthesis of the negatively charged monosaccharide that forms the backbone of pectic cell wall components. The chain is UDP-glucuronate 4-epimerase 4 (GAE4) from Arabidopsis thaliana (Mouse-ear cress).